We begin with the raw amino-acid sequence, 305 residues long: Oxygen-dependent coproporphyrinogen-III oxidase (305 aa).

Position 93 (Ser93) interacts with substrate. Positions 97 and 107 each coordinate a divalent metal cation. Residue His107 is the Proton donor of the active site. 109–111 contributes to the substrate binding site; the sequence is NVR. Residues His146 and His176 each coordinate a divalent metal cation. Residues 241-276 form an important for dimerization region; sequence YVEFNLVFDRGTLFGLQSGGRTESILMSLPPQVRWG. 259–261 contacts substrate; that stretch reads GGR.

Belongs to the aerobic coproporphyrinogen-III oxidase family. Homodimer. It depends on a divalent metal cation as a cofactor.

The protein localises to the cytoplasm. The catalysed reaction is coproporphyrinogen III + O2 + 2 H(+) = protoporphyrinogen IX + 2 CO2 + 2 H2O. Its pathway is porphyrin-containing compound metabolism; protoporphyrin-IX biosynthesis; protoporphyrinogen-IX from coproporphyrinogen-III (O2 route): step 1/1. Involved in the heme biosynthesis. Catalyzes the aerobic oxidative decarboxylation of propionate groups of rings A and B of coproporphyrinogen-III to yield the vinyl groups in protoporphyrinogen-IX. This chain is Oxygen-dependent coproporphyrinogen-III oxidase, found in Pseudomonas paraeruginosa (strain DSM 24068 / PA7) (Pseudomonas aeruginosa (strain PA7)).